A 334-amino-acid polypeptide reads, in one-letter code: MASFDFIDEVKKYVQAGHGGPGVVHFRREKFVPKGGPDGGDGGKGGDIILKGNKQLSTLLHLKYRKHIVAEDGKSGEGGCRTGADGTSIILEVPLGTVAKDIDSGNILVDITEDGQQTILLHGGRGGQGNVHFKTPTQQAPRHAQPGESGEEGWIKLELKLLAEVGLVGFPNAGKSTLLASISAAKPKIANYPFTTLVPQLGVVAYREGHSFVLADMPGIIEGASMGKGLGTRFLKHIERNRVLVLMISADDTANIVQTYTSLLKELKSYSEDLFKKPRILVISKLDLIGAEEKVTIKKLLPKQIDCVFISSVTGEGLQKFKDKIWKLLHPELK.

The 159-residue stretch at 4–162 (FDFIDEVKKY…GWIKLELKLL (159 aa)) folds into the Obg domain. The region spanning 163-330 (AEVGLVGFPN…FKDKIWKLLH (168 aa)) is the OBG-type G domain. GTP is bound by residues 169 to 176 (GFPNAGKS), 194 to 198 (FTTLV), 216 to 219 (DMPG), 284 to 287 (SKLD), and 311 to 313 (SSV). Serine 176 and threonine 196 together coordinate Mg(2+).

The protein belongs to the TRAFAC class OBG-HflX-like GTPase superfamily. OBG GTPase family. Monomer. Mg(2+) serves as cofactor.

Its subcellular location is the cytoplasm. An essential GTPase which binds GTP, GDP and possibly (p)ppGpp with moderate affinity, with high nucleotide exchange rates and a fairly low GTP hydrolysis rate. Plays a role in control of the cell cycle, stress response, ribosome biogenesis and in those bacteria that undergo differentiation, in morphogenesis control. This is GTPase Obg from Amoebophilus asiaticus (strain 5a2).